The sequence spans 383 residues: Decapping nuclease RAI1 (383 aa).

E166 provides a ligand contact to a divalent metal cation. E215 is a substrate binding site. A divalent metal cation is bound by residues D217, E235, and L236. Positions 237 and 261 each coordinate substrate.

It belongs to the DXO/Dom3Z family. Interacts with RAT1; the interaction is direct, stabilizes RAT1 protein structure and stimulates its exoribonuclease activity. The interaction also stimulates RAI1 pyrophosphohydrolase activity, probably by recruiting it to mRNA substrates. It depends on a divalent metal cation as a cofactor.

The protein localises to the nucleus. The enzyme catalyses a 5'-end NAD(+)-phospho-ribonucleoside in mRNA + H2O = a 5'-end phospho-ribonucleoside in mRNA + NAD(+) + H(+). It carries out the reaction a 5'-end (N(7)-methyl 5'-triphosphoguanosine)-ribonucleoside-ribonucleotide in mRNA + H2O = a (N(7)-methyl 5'-triphosphoguanosine)-nucleoside + a 5'-end phospho-ribonucleoside in mRNA + H(+). It catalyses the reaction a 5'-end triphospho-ribonucleoside in mRNA + H2O = a 5'-end phospho-ribonucleoside in mRNA + diphosphate + H(+). Functionally, decapping enzyme for NAD-capped RNAs: specifically hydrolyzes the nicotinamide adenine dinucleotide (NAD) cap from a subset of RNAs by removing the entire NAD moiety from the 5'-end of an NAD-capped RNA. The NAD-cap is present at the 5'-end of some RNAs and snoRNAs. In contrast to the canonical 5'-end N7 methylguanosine (m7G) cap, the NAD cap promotes mRNA decay. Also acts as a non-canonical decapping enzyme that removes the entire cap structure of m7G capped or incompletely capped RNAs. Has decapping activity toward incomplete 5'-end m7G cap mRNAs such as unmethylated 5'-end-capped RNA (cap0), while it has no activity toward 2'-O-ribose methylated m7G cap (cap1). Also possesses RNA 5'-pyrophosphohydrolase activity by hydrolyzing the 5'-end triphosphate to release pyrophosphates. Stimulates exoribonuclease activity of Rat1, allowing it to degrade RNAs with stable secondary structure more effectively. The protein is Decapping nuclease RAI1 of Lachancea thermotolerans (strain ATCC 56472 / CBS 6340 / NRRL Y-8284) (Yeast).